Consider the following 185-residue polypeptide: Adenine phosphoribosyltransferase (185 aa).

This sequence belongs to the purine/pyrimidine phosphoribosyltransferase family. Homodimer.

The protein resides in the cytoplasm. The enzyme catalyses AMP + diphosphate = 5-phospho-alpha-D-ribose 1-diphosphate + adenine. The protein operates within purine metabolism; AMP biosynthesis via salvage pathway; AMP from adenine: step 1/1. Functionally, catalyzes a salvage reaction resulting in the formation of AMP, that is energically less costly than de novo synthesis. The chain is Adenine phosphoribosyltransferase from Aliarcobacter butzleri (strain RM4018) (Arcobacter butzleri).